A 443-amino-acid polypeptide reads, in one-letter code: Xaa-Pro dipeptidase (443 aa).

Asp-246, Asp-257, His-339, Glu-384, and Glu-423 together coordinate Mn(2+).

The protein belongs to the peptidase M24B family. Bacterial-type prolidase subfamily. It depends on Mn(2+) as a cofactor.

It carries out the reaction Xaa-L-Pro dipeptide + H2O = an L-alpha-amino acid + L-proline. Splits dipeptides with a prolyl residue in the C-terminal position. This chain is Xaa-Pro dipeptidase, found in Erwinia tasmaniensis (strain DSM 17950 / CFBP 7177 / CIP 109463 / NCPPB 4357 / Et1/99).